A 416-amino-acid polypeptide reads, in one-letter code: cAMP-dependent protein kinase type II-beta regulatory subunit (416 aa).

A dimerization and phosphorylation region spans residues 2–151; the sequence is SIEIPAGLTE…RLQEACKDIL (150 aa). Residues 53 to 97 are disordered; that stretch reads HEGRTWGDAGAAAGGGTPSKGVNFAEEPMRSDSENGEEEEAAEAG. T69 is subject to Phosphothreonine. Phosphoserine occurs at positions 83, 85, and 112. 3',5'-cyclic AMP-binding positions include 152 to 273, E221, R230, 274 to 416, E350, and R359; these read LFKN…ESLP and FLKS…EPTA.

The protein belongs to the cAMP-dependent kinase regulatory chain family. As to quaternary structure, the inactive form of the enzyme is composed of two regulatory chains and two catalytic chains. Activation by cAMP produces two active catalytic monomers and a regulatory dimer that binds four cAMP molecules. Interacts with PRKACA and PRKACB. Interacts with the phosphorylated form of PJA2. Forms a complex composed of PRKAR2B, GSK3B and GSKIP through GSKIP interaction; facilitates PKA-induced phosphorylation and regulates GSK3B activity. In terms of processing, phosphorylated by the activated catalytic chain. As to expression, four types of regulatory chains are found: I-alpha, I-beta, II-alpha, and II-beta. Their expression varies among tissues and is in some cases constitutive and in others inducible. Brain. Present in a few pyramidal neurons and mostly in mossy fibers. Colocalizes with PJA2 in dentate granule cells and at postsynaptic sites of primary hippocampal neurons.

The protein resides in the cytoplasm. It is found in the cell membrane. Functionally, regulatory subunit of the cAMP-dependent protein kinases involved in cAMP signaling in cells. Type II regulatory chains mediate membrane association by binding to anchoring proteins, including the MAP2 kinase. This is cAMP-dependent protein kinase type II-beta regulatory subunit (Prkar2b) from Rattus norvegicus (Rat).